The following is a 600-amino-acid chain: Long-chain-fatty-acid--CoA ligase FadD15 (600 aa).

It belongs to the ATP-dependent AMP-binding enzyme family.

It carries out the reaction a long-chain fatty acid + ATP + CoA = a long-chain fatty acyl-CoA + AMP + diphosphate. It participates in lipid metabolism; fatty acid biosynthesis. Functionally, catalyzes the activation of long-chain fatty acids as acyl-coenzyme A (acyl-CoA), which are then transferred to the multifunctional polyketide synthase (PKS) type III for further chain extension. The sequence is that of Long-chain-fatty-acid--CoA ligase FadD15 (fadD15) from Mycobacterium bovis (strain ATCC BAA-935 / AF2122/97).